A 140-amino-acid chain; its full sequence is MKIALIAHDKKKADMIEFVTAYQPILEQHELYATGTTGLRIQEATGLKVHRFQSGPYGGDQEIGAMIARNEMDMVIFFRDPLTAQPHEPDVSALIRLCDVYSVPLATNMGTAEILIKGLERGDFAWRNIVRGRKGEINGL.

Residues 1-140 (MKIALIAHDK…RGRKGEINGL (140 aa)) enclose the MGS-like domain. Substrate-binding positions include H8, K12, 34 to 37 (TGTT), and 54 to 55 (SG). D60 functions as the Proton donor/acceptor in the catalytic mechanism. Substrate is bound at residue H87.

Belongs to the methylglyoxal synthase family.

It catalyses the reaction dihydroxyacetone phosphate = methylglyoxal + phosphate. Catalyzes the formation of methylglyoxal from dihydroxyacetone phosphate. This Geobacillus sp. (strain WCH70) protein is Methylglyoxal synthase.